The sequence spans 161 residues: Disulfide bond formation protein B (161 aa).

The Cytoplasmic segment spans residues 1–8 (MQANSRAY). The chain crosses the membrane as a helical span at residues 9–25 (FLLIAFISFGLVGFALY). The Periplasmic portion of the chain corresponds to 26 to 43 (LQFEKGYQPCPLCIMQRF). The cysteines at positions 35 and 38 are disulfide-linked. Residues 44–58 (AFIGIGLFSLLAVIA) traverse the membrane as a helical segment. The Cytoplasmic portion of the chain corresponds to 59–63 (QNTRS). Residues 64-81 (LWQGLGMLSGVGGIAVAV) traverse the membrane as a helical segment. Over 82–136 (YHVSLLLNPKASCGIDPLENWVNALPTAKVLPQVFYSDGLCTAPLPPVLGLSVPA) the chain is Periplasmic. Residues Cys-94 and Cys-122 are joined by a disulfide bond. The helical transmembrane segment at 137–155 (WSLIWLFILTLTLAVGLIR) threads the bilayer. Residues 156-161 (REKNFR) lie on the Cytoplasmic side of the membrane.

This sequence belongs to the DsbB family.

It is found in the cell inner membrane. Its function is as follows. Required for disulfide bond formation in some periplasmic proteins. Acts by oxidizing the DsbA protein. The sequence is that of Disulfide bond formation protein B from Cupriavidus pinatubonensis (strain JMP 134 / LMG 1197) (Cupriavidus necator (strain JMP 134)).